The chain runs to 120 residues: Ribosome-binding factor A (120 aa).

It belongs to the RbfA family. As to quaternary structure, monomer. Binds 30S ribosomal subunits, but not 50S ribosomal subunits or 70S ribosomes.

It is found in the cytoplasm. Functionally, one of several proteins that assist in the late maturation steps of the functional core of the 30S ribosomal subunit. Associates with free 30S ribosomal subunits (but not with 30S subunits that are part of 70S ribosomes or polysomes). Required for efficient processing of 16S rRNA. May interact with the 5'-terminal helix region of 16S rRNA. This chain is Ribosome-binding factor A, found in Rickettsia felis (strain ATCC VR-1525 / URRWXCal2) (Rickettsia azadi).